The sequence spans 196 residues: UPF0134 protein MPN_501 (196 aa).

Belongs to the UPF0134 family.

The sequence is that of UPF0134 protein MPN_501 from Mycoplasma pneumoniae (strain ATCC 29342 / M129 / Subtype 1) (Mycoplasmoides pneumoniae).